The chain runs to 352 residues: UDP-N-acetylglucosamine--N-acetylmuramyl-(pentapeptide) pyrophosphoryl-undecaprenol N-acetylglucosamine transferase (352 aa).

Residues 14–16, Asn124, Arg164, Ser185, and Gln285 contribute to the UDP-N-acetyl-alpha-D-glucosamine site; that span reads TGG.

Belongs to the glycosyltransferase 28 family. MurG subfamily.

It is found in the cell inner membrane. The catalysed reaction is di-trans,octa-cis-undecaprenyl diphospho-N-acetyl-alpha-D-muramoyl-L-alanyl-D-glutamyl-meso-2,6-diaminopimeloyl-D-alanyl-D-alanine + UDP-N-acetyl-alpha-D-glucosamine = di-trans,octa-cis-undecaprenyl diphospho-[N-acetyl-alpha-D-glucosaminyl-(1-&gt;4)]-N-acetyl-alpha-D-muramoyl-L-alanyl-D-glutamyl-meso-2,6-diaminopimeloyl-D-alanyl-D-alanine + UDP + H(+). It functions in the pathway cell wall biogenesis; peptidoglycan biosynthesis. In terms of biological role, cell wall formation. Catalyzes the transfer of a GlcNAc subunit on undecaprenyl-pyrophosphoryl-MurNAc-pentapeptide (lipid intermediate I) to form undecaprenyl-pyrophosphoryl-MurNAc-(pentapeptide)GlcNAc (lipid intermediate II). The sequence is that of UDP-N-acetylglucosamine--N-acetylmuramyl-(pentapeptide) pyrophosphoryl-undecaprenol N-acetylglucosamine transferase from Chlamydia trachomatis serovar L2 (strain ATCC VR-902B / DSM 19102 / 434/Bu).